Here is a 480-residue protein sequence, read N- to C-terminus: F-box only protein 3 (480 aa).

Residues 10–56 (LLTLESLPTDPLLLILSFVDYRDLINCCYVSRRLSQLSTHDPLWRRH) form the F-box domain. One can recognise an ApaG domain in the interval 278–408 (VATTGDITVS…FHMACPTFRV (131 aa)). Residues 419–459 (EYEEMEEEAEEEEEEENDDSADMDESDESDEDENESDEGEG) show a composition bias toward acidic residues. The disordered stretch occupies residues 419 to 464 (EYEEMEEEAEEEEEEENDDSADMDESDESDEDENESDEGEGEERRR).

Part of a SCF (SKP1-cullin-F-box) protein ligase complex SCF(FBXO3) consisting of FBXO3, SKP1, CUL1 and RBX1. Interacts with PML, interaction is direct and takes place either alone or within the SCF complex.

It is found in the nucleus. It participates in protein modification; protein ubiquitination. In terms of biological role, substrate recognition component of the SCF (SKP1-CUL1-F-box protein)-type E3 ubiquitin ligase complex, SCF(FBXO3), which mediates the ubiquitination and subsequent proteasomal degradation of target proteins. Mediates the ubiquitination of HIPK2 and probably that of EP300, leading to rapid degradation by the proteasome. In the presence of PML, HIPK2 ubiquitination still occurs, but degradation is prevented. PML, HIPK2 and FBXO3 may act synergically to activate p53/TP53-dependent transactivation. The SCF(FBXO3) also acts as a regulator of inflammation by mediating ubiquitination and degradation of FBXL2 in response to lipopolysaccharide (LPS). The SCF(FBXO3) complex specifically recognizes FBXL2 phosphorylated at 'Thr-404' and promotes its ubiquitination. The chain is F-box only protein 3 (Fbxo3) from Rattus norvegicus (Rat).